The chain runs to 591 residues: NADH-quinone oxidoreductase subunit C/D (591 aa).

The NADH dehydrogenase I subunit C stretch occupies residues 1–182 (MVTVVENTDP…TPYFLNTAKQ (182 aa)). The tract at residues 206–591 (DFMFLNIGPN…IDIVMADCDR (386 aa)) is NADH dehydrogenase I subunit D.

It in the N-terminal section; belongs to the complex I 30 kDa subunit family. This sequence in the C-terminal section; belongs to the complex I 49 kDa subunit family. NDH-1 is composed of 13 different subunits. Subunits NuoB, CD, E, F, and G constitute the peripheral sector of the complex.

It localises to the cell inner membrane. The catalysed reaction is a quinone + NADH + 5 H(+)(in) = a quinol + NAD(+) + 4 H(+)(out). Its function is as follows. NDH-1 shuttles electrons from NADH, via FMN and iron-sulfur (Fe-S) centers, to quinones in the respiratory chain. The immediate electron acceptor for the enzyme in this species is believed to be ubiquinone. Couples the redox reaction to proton translocation (for every two electrons transferred, four hydrogen ions are translocated across the cytoplasmic membrane), and thus conserves the redox energy in a proton gradient. The sequence is that of NADH-quinone oxidoreductase subunit C/D from Psychrobacter cryohalolentis (strain ATCC BAA-1226 / DSM 17306 / VKM B-2378 / K5).